A 666-amino-acid polypeptide reads, in one-letter code: 7SK snRNA methylphosphate capping enzyme (666 aa).

M1 is modified (N-acetylmethionine). The span at 1 to 10 (MIEMAAEKEP) shows a compositional bias: basic and acidic residues. Positions 1–141 (MIEMAAEKEP…GSGGSFKHPA (141 aa)) are disordered. Residues 50 to 61 (GPGPRAHSAGAA) are compositionally biased toward low complexity. Phosphoserine is present on S57. Omega-N-methylarginine is present on R91. Residues S126, S150, and S154 each carry the phosphoserine modification. T188 bears the Phosphothreonine mark. Phosphoserine is present on residues S191, S192, and S229. A compositionally biased stretch (basic residues) spans 235–244 (RKRHRHRGPH). The disordered stretch occupies residues 235–291 (RKRHRHRGPHHQQQQQASGGNDSNAAVLPTDPLTPSLHGEGATQQQQNRGQNRDAPQ). Residues 245-254 (HQQQQQASGG) show a composition bias toward low complexity. T268 carries the post-translational modification Phosphothreonine. S307 and S321 each carry phosphoserine. Residues 309 to 337 (LPSALQGSSGSLSAPPAASVTSAPSTSSS) are compositionally biased toward low complexity. Residues 309–383 (LPSALQGSSG…HHHPLPATGF (75 aa)) form a disordered region. Basic residues predominate over residues 338–347 (SRHRKRRRTS). Residue S368 is modified to Phosphoserine. S-adenosyl-L-methionine is bound by residues Y399, R410, 428-430 (GCN), 451-452 (DI), 536-537 (NY), and F558. Residues 408–663 (DVRLRVLKPE…PVYLFHKARS (256 aa)) form the Bin3-type SAM domain. K620 participates in a covalent cross-link: Glycyl lysine isopeptide (Lys-Gly) (interchain with G-Cter in SUMO2).

It belongs to the methyltransferase superfamily. In terms of assembly, core component of the 7SK RNP complex, at least composed of 7SK RNA, LARP7, MEPCE, HEXIM1 (or HEXIM2) and P-TEFb (composed of CDK9 and CCNT1/cyclin-T1). Interacts with METTL16. Interacts with RBM7; upon genotoxic stress this interaction is enhanced, triggering the release of inactive P-TEFb complex from the core, yielding to P-TEFb complex activation. In terms of processing, dephosphorylated at Ser-126 by the PNUTS-PP1 complex, promoting RNA polymerase II transcription pause-release.

The protein resides in the nucleus. The catalysed reaction is a 5'-end triphospho-guanosine-ribonucleotide-snRNA + S-adenosyl-L-methionine = a 5'-end methyltriphosphate-guanosine-ribonucleotide-snRNA + S-adenosyl-L-homocysteine. Functionally, S-adenosyl-L-methionine-dependent methyltransferase that adds a methylphosphate cap at the 5'-end of 7SK snRNA (7SK RNA), leading to stabilize it. Also has a non-enzymatic function as part of the 7SK RNP complex: the 7SK RNP complex sequesters the positive transcription elongation factor b (P-TEFb) in a large inactive 7SK RNP complex preventing RNA polymerase II phosphorylation and subsequent transcriptional elongation. The 7SK RNP complex also promotes snRNA gene transcription by RNA polymerase II via interaction with the little elongation complex (LEC). In the 7SK RNP complex, MEPCE is required to stabilize 7SK RNA and facilitate the assembly of 7SK RNP complex. MEPCE has a non-enzymatic function in the 7SK RNP complex; it has a non-enzymatic function; interaction with LARP7 within the 7SK RNP complex occluding its catalytic center. Also required for stability of U6 snRNAs. This Mus musculus (Mouse) protein is 7SK snRNA methylphosphate capping enzyme.